The following is a 1687-amino-acid chain: Protein TOPAZ1 (1687 aa).

Disordered regions lie at residues 1 to 131, 319 to 339, 596 to 632, and 880 to 916; these read MRRP…QPGF, EESSVGRKPRKRMKLSEKADE, LSRSGSEVISNTTEDTQLTSDTQSLTGNKKRDRGNLT, and TSEVPRISQEPNVPGEHQSTDSKYVETPVKKEPSDDL. Residues 31–41 show a composition bias toward gly residues; that stretch reads GAAGGCGPEAG. The span at 80–113 shows a compositional bias: basic and acidic residues; it reads RRVEGRRGQVSPSDRRGLEAAKEAEFPLQTERHT. Over residues 598–622 the composition is skewed to polar residues; it reads RSGSEVISNTTEDTQLTSDTQSLTG. A compositionally biased stretch (basic and acidic residues) spans 897–916; it reads QSTDSKYVETPVKKEPSDDL.

It is found in the cytoplasm. The protein resides in the cytosol. Functionally, important for normal spermatogenesis and male fertility. Specifically required for progression to the post-meiotic stages of spermatocyte development. Seems to be necessary for normal expression levels of a number of testis-expressed gene transcripts, although its role in this process is unclear. The sequence is that of Protein TOPAZ1 (TOPAZ1) from Macaca fascicularis (Crab-eating macaque).